The sequence spans 200 residues: HTH-type transcriptional repressor KstR2 (200 aa).

Residues 9–69 (NSRRGELLEL…ELLRGFLDWL (61 aa)) enclose the HTH tetR-type domain. Positions 32–51 (TVRDIADGAGILSGSLYHHF) form a DNA-binding region, H-T-H motif.

Homodimer.

In terms of biological role, controls the expression of a small regulon that may play a role in the utilization of cholesterol. In Mycobacterium tuberculosis (strain CDC 1551 / Oshkosh), this protein is HTH-type transcriptional repressor KstR2 (kstR2).